The sequence spans 280 residues: Dihydropteroate synthase (280 aa).

A Pterin-binding domain is found at 1–265 (MSPAPVQVMG…DVRASVDAIK (265 aa)). A Mg(2+)-binding site is contributed by Asn-13. Residues Asp-86, Asn-105, Asp-177, Lys-213, and 253 to 255 (RVH) contribute to the (7,8-dihydropterin-6-yl)methyl diphosphate site.

It belongs to the DHPS family. Homodimer. The cofactor is Mg(2+).

It catalyses the reaction (7,8-dihydropterin-6-yl)methyl diphosphate + 4-aminobenzoate = 7,8-dihydropteroate + diphosphate. The protein operates within cofactor biosynthesis; tetrahydrofolate biosynthesis; 7,8-dihydrofolate from 2-amino-4-hydroxy-6-hydroxymethyl-7,8-dihydropteridine diphosphate and 4-aminobenzoate: step 1/2. Functionally, catalyzes the condensation of para-aminobenzoate (pABA) with 6-hydroxymethyl-7,8-dihydropterin diphosphate (DHPt-PP) to form 7,8-dihydropteroate (H2Pte), the immediate precursor of folate derivatives. The chain is Dihydropteroate synthase (folP1) from Mycobacterium bovis (strain ATCC BAA-935 / AF2122/97).